Here is a 626-residue protein sequence, read N- to C-terminus: Chaperone protein HtpG (626 aa).

The tract at residues M1–R341 is a; substrate-binding. A b region spans residues E342 to K552. Residues I553–V626 are c.

Belongs to the heat shock protein 90 family. As to quaternary structure, homodimer.

The protein resides in the cytoplasm. Molecular chaperone. Has ATPase activity. This Bacillus subtilis (strain 168) protein is Chaperone protein HtpG.